A 318-amino-acid polypeptide reads, in one-letter code: Probable cell division protein WhiA (318 aa).

A DNA-binding region (H-T-H motif) is located at residues 276–310; it reads TLQELGEMVESGSISKSGINHRLRKIDQIADKIRN.

This sequence belongs to the WhiA family.

Its function is as follows. Involved in cell division and chromosome segregation. This Exiguobacterium sibiricum (strain DSM 17290 / CCUG 55495 / CIP 109462 / JCM 13490 / 255-15) protein is Probable cell division protein WhiA.